The chain runs to 206 residues: Large ribosomal subunit protein mL62 (206 aa).

The N-terminal 29 residues, 1 to 29 (MATAWGLRWGLSRTGTLLLAPPARCARRA), are a transit peptide targeting the mitochondrion. Residue Gln-90 is modified to N5-methylglutamine.

Belongs to the prokaryotic/mitochondrial release factor family. Mitochondrion-specific ribosomal protein mL62 subfamily. Component of the mitochondrial ribosome large subunit (39S) which comprises a 16S rRNA and about 50 distinct proteins. In terms of processing, methylation of glutamine in the GGQ triplet by HEMK1.

Its subcellular location is the mitochondrion. The enzyme catalyses an N-acyl-L-alpha-aminoacyl-tRNA + H2O = an N-acyl-L-amino acid + a tRNA + H(+). In terms of biological role, essential peptidyl-tRNA hydrolase component of the mitochondrial large ribosomal subunit. Acts as a codon-independent translation release factor that has lost all stop codon specificity and directs the termination of translation in mitochondrion, possibly in case of abortive elongation. May be involved in the hydrolysis of peptidyl-tRNAs that have been prematurely terminated and thus in the recycling of stalled mitochondrial ribosomes. The polypeptide is Large ribosomal subunit protein mL62 (Mus musculus (Mouse)).